The sequence spans 181 residues: Inner kinetochore subunit MCM16 (181 aa).

Residues 112–171 (KQLIESRAERDELMSKLIELSSKFPKPTIPPDDSDTAGKQVEVEKENETIQELMIALQIH) are a coiled coil.

This sequence belongs to the CENP-H/MCM16 family. As to quaternary structure, component of the heterotrimeric kinetochore subcomplex CTF3, which consists of CTF3, MCM16 and MCM22. The CTF3 subcomplex is part of a larger constitutive centromere-associated network (CCAN) (also known as central kinetochore CTF19 complex in yeast), which is composed of at least AME1, CHL4, CNN1, CTF3, CTF19, IML3, MCM16, MCM21, MCM22, MHF1, MHF2, MIF2, NKP1, NKP2, OKP1 and WIP1. Interacts with CTF19.

It localises to the nucleus. It is found in the chromosome. The protein resides in the centromere. Its subcellular location is the kinetochore. Functionally, component of the kinetochore, a multiprotein complex that assembles on centromeric DNA and attaches chromosomes to spindle microtubules, mediating chromosome segregation and sister chromatid segregation during meiosis and mitosis. Component of the inner kinetochore constitutive centromere-associated network (CCAN), which serves as a structural platform for outer kinetochore assembly. The sequence is that of Inner kinetochore subunit MCM16 (MCM16) from Saccharomyces cerevisiae (strain ATCC 204508 / S288c) (Baker's yeast).